Reading from the N-terminus, the 415-residue chain is Amylovoran biosynthesis protein AmsJ (415 aa).

The protein belongs to the polysaccharide pyruvyl transferase family.

Its pathway is glycan metabolism; exopolysaccharide biosynthesis. Its function is as follows. Involved in the biosynthesis of amylovoran which functions as a virulence factor. The sequence is that of Amylovoran biosynthesis protein AmsJ (amsJ) from Erwinia amylovora (Fire blight bacteria).